We begin with the raw amino-acid sequence, 449 residues long: Elongation factor 1-alpha 1 (449 aa).

In terms of domain architecture, tr-type G spans 5 to 230 (KVHMNLVVVG…DMLEPPVRPS (226 aa)). Residues 14–21 (GHVDAGKS) form a G1 region. Position 14–21 (14–21 (GHVDAGKS)) interacts with GTP. Positions 70–74 (GITID) are G2. The tract at residues 91-94 (DAPG) is G3. GTP is bound by residues 91 to 95 (DAPGH) and 153 to 156 (NKMD). Positions 153-156 (NKMD) are G4. The tract at residues 194–196 (SGW) is G5. Glu362 is modified (5-glutamyl glycerylphosphorylethanolamine).

It belongs to the TRAFAC class translation factor GTPase superfamily. Classic translation factor GTPase family. EF-Tu/EF-1A subfamily. Phosphatidylethanolamine (PE) is a direct precursor of the ethanolamine-phosphoglycerol (EPG) moiety.

It localises to the cytoplasm. Its function is as follows. This protein promotes the GTP-dependent binding of aminoacyl-tRNA to the A-site of ribosomes during protein biosynthesis. The sequence is that of Elongation factor 1-alpha 1 (TEF1) from Trypanosoma brucei brucei (strain 927/4 GUTat10.1).